The sequence spans 141 residues: Nucleoside diphosphate kinase (141 aa).

Residues Lys11, Phe59, Arg87, Thr93, Arg104, and Asn114 each contribute to the ATP site. His117 (pros-phosphohistidine intermediate) is an active-site residue.

It belongs to the NDK family. In terms of assembly, homotetramer. It depends on Mg(2+) as a cofactor.

Its subcellular location is the cytoplasm. It carries out the reaction a 2'-deoxyribonucleoside 5'-diphosphate + ATP = a 2'-deoxyribonucleoside 5'-triphosphate + ADP. It catalyses the reaction a ribonucleoside 5'-diphosphate + ATP = a ribonucleoside 5'-triphosphate + ADP. In terms of biological role, major role in the synthesis of nucleoside triphosphates other than ATP. The ATP gamma phosphate is transferred to the NDP beta phosphate via a ping-pong mechanism, using a phosphorylated active-site intermediate. This is Nucleoside diphosphate kinase from Chromobacterium violaceum (strain ATCC 12472 / DSM 30191 / JCM 1249 / CCUG 213 / NBRC 12614 / NCIMB 9131 / NCTC 9757 / MK).